Reading from the N-terminus, the 694-residue chain is Elongation factor G 2 (694 aa).

A tr-type G domain is found at 5 to 280 (SKYRNIGIFA…AVVDYLPSPT (276 aa)). GTP is bound by residues 14 to 21 (AHVDAGKT), 78 to 82 (DTPGH), and 132 to 135 (NKLD).

Belongs to the TRAFAC class translation factor GTPase superfamily. Classic translation factor GTPase family. EF-G/EF-2 subfamily.

It localises to the cytoplasm. Catalyzes the GTP-dependent ribosomal translocation step during translation elongation. During this step, the ribosome changes from the pre-translocational (PRE) to the post-translocational (POST) state as the newly formed A-site-bound peptidyl-tRNA and P-site-bound deacylated tRNA move to the P and E sites, respectively. Catalyzes the coordinated movement of the two tRNA molecules, the mRNA and conformational changes in the ribosome. In Pseudoalteromonas translucida (strain TAC 125), this protein is Elongation factor G 2.